Here is a 140-residue protein sequence, read N- to C-terminus: MNRAKVLSSYLGLLRTEKKVFQNDKRALEHVINLTRVQFRDNKNETDNTKINEMIDHANAVSHFLVKDLIQGVRKDEKTIQLKFDENTKSYQQYEFVNDQPPQRKKRGKIQIDDEQPTTCCGGGCGKPMPSNNSEKSTCS.

The tract at residues Gln93–Ser140 is disordered. Residues Pro130–Ser140 are compositionally biased toward polar residues.

Belongs to the complex I LYR family. Interacts with UQCRFS1.

Its subcellular location is the mitochondrion matrix. Its function is as follows. Assembly factor required for Rieske Fe-S protein UQCRFS1 incorporation into the cytochrome b-c1 (CIII) complex. Functions as a chaperone, binding to this subunit within the mitochondrial matrix and stabilizing it prior to its translocation and insertion into the late CIII dimeric intermediate within the mitochondrial inner membrane. The chain is Complex III assembly factor LYRM7 (lyrm7) from Dictyostelium discoideum (Social amoeba).